Consider the following 2550-residue polypeptide: Highly reducing polyketide synthase otaA (2550 aa).

The Ketosynthase family 3 (KS3) domain occupies 9 to 431 (SEPLAIIGLA…GTNAHAVVED (423 aa)). Catalysis depends on for beta-ketoacyl synthase activity residues C182, H317, and H355. A malonyl-CoA:ACP transacylase (MAT) domain region spans residues 572 to 894 (FVFTGQGANW…KRYETNGSTI (323 aa)). The N-terminal hotdog fold stretch occupies residues 959 to 1094 (HELLGVPVED…GSVRAETGPP (136 aa)). The tract at residues 959–1252 (HELLGVPVED…DLVQLPANND (294 aa)) is dehydratase (DH) domain. The PKS/mFAS DH domain occupies 959–1253 (HELLGVPVED…LVQLPANNDD (295 aa)). The interval 1107-1253 (AEPVDIAQMY…LVQLPANNDD (147 aa)) is C-terminal hotdog fold. Residues I1420 and E1442 each contribute to the S-adenosyl-L-methionine site. A methyltransferase (CMeT) domain region spans residues 1433 to 1612 (HAQTGIKILE…GLRPRLIIND (180 aa)). The tract at residues 1859 to 1919 (PDEVKIRIHA…DQVMALRTGP (61 aa)) is enoyl reductase (ER) (ER) domain. Residues 2166–2345 (ASYLLIGGFG…PATSVSLGSV (180 aa)) form a ketoreductase (KR) domain region. The 78-residue stretch at 2454-2531 (AAVEVVTRAI…QLAQQAADAS (78 aa)) folds into the Carrier domain. S2491 is subject to O-(pantetheine 4'-phosphoryl)serine.

Pantetheine 4'-phosphate is required as a cofactor.

The enzyme catalyses 4 malonyl-CoA + acetyl-CoA + 5 NADPH + 9 H(+) = 7-methylmellein + 3 CO2 + 5 NADP(+) + 5 CoA + 4 H2O. It participates in mycotoxin biosynthesis. In terms of biological role, highly reducing polyketide synthase; part of the gene cluster that mediates the biosynthesis of ochratoxin A (OTA), a mycotoxin composed of a chlorinated type I polyketide dihydroisocoumarin moiety linked to L-phenylalanine, and demonstrated to have nephrotoxic, immunotoxic, genotoxic, neurotoxic, and teratogenic properties. OtaA catalyzes the condensation of one acetate and 4 malonate units to form the isocoumarin group. The pathway begins with the highly reducing polyketide synthase otaA that catalyzes the formation of the isocoumarin group during the initial stages of biosynthesis, starting from one acetate and 4 malonate units, to originate the characteristic pentaketide skeleton 7-methylmellein (7-MM) of the OTA molecule. The newly identified cyclase otaY might be involved in the polyketide cyclization reaction during the initial steps of the OTA biosynthesis. 7-MM is then oxidized into 7-carboxymellein (also called ochratoxin beta) by the cytochrome P450 monooxygenase otaC. The NRPS encoded by the otaB gene is involved in the linking of phenylalanine to the dihydroisocoumarin ring. The reaction catalyzed by NRPS results in the production of ochratoxin B (OTB), which is the non-chlorinated analog of OTA and which subsequently serves as the substrate of the halogenase otaD for chlorination activity to form the final molecular structure of OTA, containing a chlorine atom in the C-5 position of the molecule. This chain is Highly reducing polyketide synthase otaA, found in Aspergillus niger (strain ATCC MYA-4892 / CBS 513.88 / FGSC A1513).